The chain runs to 84 residues: Molybdopterin synthase sulfur carrier subunit (84 aa).

1-thioglycine; alternate is present on Gly84. The residue at position 84 (Gly84) is a Glycyl adenylate; alternate.

This sequence belongs to the MoaD family. MOCS2A subfamily. As to quaternary structure, heterotetramer; composed of 2 small (MOCS2A) and 2 large (MOCS2B) subunits. C-terminal thiocarboxylation occurs in 2 steps, it is first acyl-adenylated (-COAMP) via the hesA/moeB/thiF part of MOCS3, then thiocarboxylated (-COSH) via the rhodanese domain of MOCS3.

The protein resides in the cytoplasm. It participates in cofactor biosynthesis; molybdopterin biosynthesis. Functionally, acts as a sulfur carrier required for molybdopterin biosynthesis. Component of the molybdopterin synthase complex that catalyzes the conversion of precursor Z into molybdopterin by mediating the incorporation of 2 sulfur atoms into precursor Z to generate a dithiolene group. In the complex, serves as sulfur donor by being thiocarboxylated (-COSH) at its C-terminus by MOCS3. After interaction with MOCS2B, the sulfur is then transferred to precursor Z to form molybdopterin. The protein is Molybdopterin synthase sulfur carrier subunit of Caenorhabditis briggsae.